Here is a 403-residue protein sequence, read N- to C-terminus: Glucose/galactose-binding lipoprotein (403 aa).

A signal peptide spans 1 to 25 (MKENSCTACSRRLALFVGAAVLVVG). Cysteine 26 carries N-palmitoyl cysteine lipidation. The S-diacylglycerol cysteine moiety is linked to residue cysteine 26.

This sequence belongs to the bacterial solute-binding protein 2 family.

It localises to the cell membrane. Functionally, may be involved in the transport of sugars. May have a role in chemotaxis. This chain is Glucose/galactose-binding lipoprotein (mglB), found in Treponema pallidum (strain Nichols).